The following is a 242-amino-acid chain: Histone-lysine N-methyltransferase set-1 (242 aa).

The interval 1–61 (MKVAAKKLAT…TRSRKGVSVK (61 aa)) is disordered. A compositionally biased stretch (low complexity) spans 30–43 (SENPSSLASHSSSS). Residues 104 to 226 (RLLEVYKDVV…QGEELLYDYG (123 aa)) enclose the SET domain. S-adenosyl-L-methionine-binding positions include 114–116 (KGR), Y159, and 186–187 (NH).

The protein belongs to the class V-like SAM-binding methyltransferase superfamily. Histone-lysine methyltransferase family. PR/SET subfamily. In terms of tissue distribution, in embryos, it is expressed ubiquitously. In late embryos, it is expressed in hypodermal seam cells. In L3 and L4 larvae and thereafter, it is expressed in vulval precursor cells. In adult males, it is also expressed in 6 unidentified posterior cells.

Its subcellular location is the nucleus. The protein localises to the chromosome. The enzyme catalyses L-lysyl(20)-[histone H4] + S-adenosyl-L-methionine = N(6)-methyl-L-lysyl(20)-[histone H4] + S-adenosyl-L-homocysteine + H(+). Histone methyltransferase that specifically monomethylates 'Lys-20' of histone H4 (H4K20me1). H4K20me1 is enriched on hermaphrodite X chromosomes and during mitosis. Involved in dosage compensation by repression of X-linked gene expression in hermaphrodites. Plays a role in growth and body fat regulation downstream of the TOR complex 2 pathway. The chain is Histone-lysine N-methyltransferase set-1 (set-1) from Caenorhabditis elegans.